Reading from the N-terminus, the 86-residue chain is MAVKIRLKRMGAKNNPFYRVVVADARSPRDGRVIDEIGYYDPVKQPAAVVINEEKALDWLKKGAQLTETARALFRKAGVLQKFQQK.

The protein belongs to the bacterial ribosomal protein bS16 family.

This is Small ribosomal subunit protein bS16 from Carboxydothermus hydrogenoformans (strain ATCC BAA-161 / DSM 6008 / Z-2901).